We begin with the raw amino-acid sequence, 510 residues long: Ribonuclease Y (510 aa).

Residues 2–22 (IYIIFSSIFAGFILGFLVRVF) form a helical membrane-spanning segment. The KH domain occupies 198-258 (TVASVELPND…IRKELAKRTL (61 aa)). An HD domain is found at 324 to 419 (VLSHSKETAI…VQIADAISAS (96 aa)).

This sequence belongs to the RNase Y family.

The protein localises to the cell membrane. Functionally, endoribonuclease that initiates mRNA decay. The chain is Ribonuclease Y from Borrelia garinii subsp. bavariensis (strain ATCC BAA-2496 / DSM 23469 / PBi) (Borreliella bavariensis).